We begin with the raw amino-acid sequence, 360 residues long: MSSPKEPLSVVVAGGGTAGHIEPALAVAEALRDGYGATVTALGTARGLETSLVPDRGFDLRLIEPVPVPRTPNLDLVKLPFRVAKSLRQARQVLRDTGAHAVVGFGGYVSAPAYLAARSLGIPFFVHEANARAGMANKLGVRLGGVGLNATENSGMPGQVVGIPIRRELAGGEDATAAERGRTQWGLEADRPTVLVTGGSQGSVSINSAVAGALDDLLGAGIQVLHAVGKRNSLPTARPGYVPVPFIEDMQAAYAVADLIVCRSGAMTVAEVTASGIPAIYVPLPHGNGEQALNASAVIAAGAAKLVDDADLTPQRLVSEVRDIVGNPATLHRMSAAARTSTVGDAAGVIAGLVATAAGY.

Residues 17-19 (TAG), Asn130, Arg166, Ser200, Ile247, and Gln291 each bind UDP-N-acetyl-alpha-D-glucosamine.

This sequence belongs to the glycosyltransferase 28 family. MurG subfamily.

The protein resides in the cell membrane. It catalyses the reaction di-trans,octa-cis-undecaprenyl diphospho-N-acetyl-alpha-D-muramoyl-L-alanyl-D-glutamyl-meso-2,6-diaminopimeloyl-D-alanyl-D-alanine + UDP-N-acetyl-alpha-D-glucosamine = di-trans,octa-cis-undecaprenyl diphospho-[N-acetyl-alpha-D-glucosaminyl-(1-&gt;4)]-N-acetyl-alpha-D-muramoyl-L-alanyl-D-glutamyl-meso-2,6-diaminopimeloyl-D-alanyl-D-alanine + UDP + H(+). It functions in the pathway cell wall biogenesis; peptidoglycan biosynthesis. In terms of biological role, cell wall formation. Catalyzes the transfer of a GlcNAc subunit on undecaprenyl-pyrophosphoryl-MurNAc-pentapeptide (lipid intermediate I) to form undecaprenyl-pyrophosphoryl-MurNAc-(pentapeptide)GlcNAc (lipid intermediate II). The sequence is that of UDP-N-acetylglucosamine--N-acetylmuramyl-(pentapeptide) pyrophosphoryl-undecaprenol N-acetylglucosamine transferase from Corynebacterium efficiens (strain DSM 44549 / YS-314 / AJ 12310 / JCM 11189 / NBRC 100395).